A 913-amino-acid chain; its full sequence is MMANYFRSTFKFRKTTVSTLFVLTVLVISILTWFDANKYKSNLPDDKSSNSLLDAAWHDLQVITEKPHPYTSHFNDNVHDYLLQRVEQISKKSKFIEVSDDSANGVSKLFQHLDVFNDSSTETRLVYYESSNILVKVEGKSPQLPGLLLSAHFDSVPTGYGATDDGKGVVSLLALLQYYSENQPERTIVFNFNNNEEFGLLGATIFTYSEWFKLVSYVINLEGAGAGSKAALFRTSDTATALLYEKSVKDQPFGNSIYQQGFYSRFVSSETDYKIYELNGLRGWDIAFYKPRDMYHTGKDTVQHTSKAALWHMLNIAWQLSKYVVADQTTASQEILDDESNSSPAIYFDIISKWFFVVSARQLYVWNIVLLCVLPITLILLRIVCNKLGTWRMPTSALFTRIPFALFVSSFTIYFTKELLLQLNPTIWSRNFILPFLFCISEFLLINTLVLALFEYLWPIQDFKTLSLLELSAIAWLFLLKCTWDLSSSGFKATGVYPVTVFYLFISLASMFGLCSMCFGKRPNATNDYDNSEFMRPDTNDTHSIECPRQPEDSETTETSPLINTPSSSVQSSPIASSKSLPGAVQYLQRTLNYDWSAQYLLAVPINAFLIWESLFNLFDALSMTVQESNKATEAVFKFAIYGAIFLCSPLLPFTTKLNRFVVIILGVVTILAASFSLFAAPYTELAPLKLRFVQRIDISRETKQNVEIYGRAGANIQEVLSSLPSRPNVSCKDSGSGTELCVYEGMWPNFGIPMKVDVVKNTHNDKEHFEYEPYFADLRINVADNRLCLMKFNTTGKKHLKQVEFKVGNETTTHSYRTDEGIDSLLLHKLSWNVPYYDVQLKWIPQYTAEGSSDTLGVSIDCYWGEFDETIVNGQVVQKIPAYNELLQFLPETFIVSNRESGMVTIHKYLEL.

Residues 1–15 are Cytoplasmic-facing; sequence MMANYFRSTFKFRKT. Residues 16-36 form a helical membrane-spanning segment; that stretch reads TVSTLFVLTVLVISILTWFDA. Over 37–364 the chain is Vacuolar; it reads NKYKSNLPDD…FFVVSARQLY (328 aa). N-linked (GlcNAc...) asparagine glycosylation is present at Asn-117. 2 residues coordinate Zn(2+): His-152 and Asp-164. Glu-196 functions as the Proton acceptor in the catalytic mechanism. Zn(2+) is bound by residues Glu-197, Glu-222, and His-296. The chain crosses the membrane as a helical span at residues 365–385; sequence VWNIVLLCVLPITLILLRIVC. Topologically, residues 386-394 are cytoplasmic; it reads NKLGTWRMP. A helical membrane pass occupies residues 395–415; sequence TSALFTRIPFALFVSSFTIYF. The Vacuolar portion of the chain corresponds to 416-431; the sequence is TKELLLQLNPTIWSRN. The chain crosses the membrane as a helical span at residues 432–452; sequence FILPFLFCISEFLLINTLVLA. Residues 453–465 lie on the Cytoplasmic side of the membrane; sequence LFEYLWPIQDFKT. Residues 466–486 form a helical membrane-spanning segment; it reads LSLLELSAIAWLFLLKCTWDL. The Vacuolar portion of the chain corresponds to 487 to 494; that stretch reads SSSGFKAT. The helical transmembrane segment at 495-515 threads the bilayer; the sequence is GVYPVTVFYLFISLASMFGLC. Over 516 to 600 the chain is Cytoplasmic; sequence SMCFGKRPNA…TLNYDWSAQY (85 aa). Over residues 540–552 the composition is skewed to basic and acidic residues; it reads NDTHSIECPRQPE. Residues 540 to 578 are disordered; sequence NDTHSIECPRQPEDSETTETSPLINTPSSSVQSSPIASS. Residues 557 to 566 are compositionally biased toward polar residues; it reads TETSPLINTP. A compositionally biased stretch (low complexity) spans 567–578; the sequence is SSSVQSSPIASS. Residues 601-621 form a helical membrane-spanning segment; it reads LLAVPINAFLIWESLFNLFDA. Residues 622–634 are Vacuolar-facing; sequence LSMTVQESNKATE. Residues 635–655 traverse the membrane as a helical segment; the sequence is AVFKFAIYGAIFLCSPLLPFT. Residues 656–660 are Cytoplasmic-facing; the sequence is TKLNR. The helical transmembrane segment at 661–681 threads the bilayer; it reads FVVIILGVVTILAASFSLFAA. At 682-913 the chain is on the vacuolar side; the sequence is PYTELAPLKL…MVTIHKYLEL (232 aa). Residues Asn-729, Asn-794, and Asn-810 are each glycosylated (N-linked (GlcNAc...) asparagine).

The protein belongs to the peptidase M28 family. The cofactor is Zn(2+).

The protein localises to the vacuole membrane. Functionally, may be involved in vacuolar sorting and osmoregulation. The chain is Vacuolar membrane protease from Kluyveromyces lactis (strain ATCC 8585 / CBS 2359 / DSM 70799 / NBRC 1267 / NRRL Y-1140 / WM37) (Yeast).